Here is a 92-residue protein sequence, read N- to C-terminus: Small ribosomal subunit protein bS20 (92 aa).

Belongs to the bacterial ribosomal protein bS20 family.

Its function is as follows. Binds directly to 16S ribosomal RNA. The chain is Small ribosomal subunit protein bS20 from Rickettsia africae (strain ESF-5).